The sequence spans 254 residues: Type III pantothenate kinase (254 aa).

6–13 contacts ATP; it reads DVGNTNTT. Substrate contacts are provided by residues tyrosine 100 and 107–110; that span reads GADR. The Proton acceptor role is filled by aspartate 109. A K(+)-binding site is contributed by aspartate 129. Threonine 132 contributes to the ATP binding site. Residue threonine 184 coordinates substrate.

This sequence belongs to the type III pantothenate kinase family. Homodimer. It depends on NH4(+) as a cofactor. K(+) is required as a cofactor.

It is found in the cytoplasm. The catalysed reaction is (R)-pantothenate + ATP = (R)-4'-phosphopantothenate + ADP + H(+). The protein operates within cofactor biosynthesis; coenzyme A biosynthesis; CoA from (R)-pantothenate: step 1/5. Catalyzes the phosphorylation of pantothenate (Pan), the first step in CoA biosynthesis. This Anaeromyxobacter dehalogenans (strain 2CP-1 / ATCC BAA-258) protein is Type III pantothenate kinase.